The chain runs to 264 residues: Proteasome subunit alpha type-4 (264 aa).

The protein belongs to the peptidase T1A family. As to quaternary structure, the 26S proteasome consists of a 20S proteasome core and two 19S regulatory subunits. The 20S proteasome core is composed of 28 subunits that are arranged in four stacked rings, resulting in a barrel-shaped structure. The two end rings are each formed by seven alpha subunits, and the two central rings are each formed by seven beta subunits. The catalytic chamber with the active sites is on the inside of the barrel. Interacts with PI31.

It localises to the cytoplasm. Its subcellular location is the nucleus. Functionally, the proteasome is a multicatalytic proteinase complex which is characterized by its ability to cleave peptides with Arg, Phe, Tyr, Leu, and Glu adjacent to the leaving group at neutral or slightly basic pH. The proteasome has an ATP-dependent proteolytic activity. The polypeptide is Proteasome subunit alpha type-4 (Prosalpha3) (Drosophila melanogaster (Fruit fly)).